A 315-amino-acid polypeptide reads, in one-letter code: Methionyl-tRNA formyltransferase (315 aa).

113-116 (SLLP) serves as a coordination point for (6S)-5,6,7,8-tetrahydrofolate.

Belongs to the Fmt family.

The catalysed reaction is L-methionyl-tRNA(fMet) + (6R)-10-formyltetrahydrofolate = N-formyl-L-methionyl-tRNA(fMet) + (6S)-5,6,7,8-tetrahydrofolate + H(+). Its function is as follows. Attaches a formyl group to the free amino group of methionyl-tRNA(fMet). The formyl group appears to play a dual role in the initiator identity of N-formylmethionyl-tRNA by promoting its recognition by IF2 and preventing the misappropriation of this tRNA by the elongation apparatus. This is Methionyl-tRNA formyltransferase from Salmonella enteritidis PT4 (strain P125109).